Consider the following 617-residue polypeptide: UvrABC system protein C (617 aa).

The GIY-YIG domain maps to 11 to 85; the sequence is TTPGVYIFRK…IKQHRPHYNV (75 aa). The region spanning 194–229 is the UVR domain; the sequence is APVIARLKEDMKVAAQGQDFEQAARLRDRVQAVEKL.

It belongs to the UvrC family. As to quaternary structure, interacts with UvrB in an incision complex.

The protein resides in the cytoplasm. The UvrABC repair system catalyzes the recognition and processing of DNA lesions. UvrC both incises the 5' and 3' sides of the lesion. The N-terminal half is responsible for the 3' incision and the C-terminal half is responsible for the 5' incision. The chain is UvrABC system protein C from Deinococcus radiodurans (strain ATCC 13939 / DSM 20539 / JCM 16871 / CCUG 27074 / LMG 4051 / NBRC 15346 / NCIMB 9279 / VKM B-1422 / R1).